The chain runs to 600 residues: Glutamine--fructose-6-phosphate aminotransferase [isomerizing] (600 aa).

Cys2 functions as the Nucleophile; for GATase activity in the catalytic mechanism. In terms of domain architecture, Glutamine amidotransferase type-2 spans 2 to 217; sequence CGIVGYIGQN…DKEIVLVSRN (216 aa). SIS domains are found at residues 283–422 and 452–590; these read IRTA…VKGL and LARD…VDKP. The For Fru-6P isomerization activity role is filled by Lys595.

As to quaternary structure, homodimer.

It localises to the cytoplasm. It carries out the reaction D-fructose 6-phosphate + L-glutamine = D-glucosamine 6-phosphate + L-glutamate. Catalyzes the first step in hexosamine metabolism, converting fructose-6P into glucosamine-6P using glutamine as a nitrogen source. The sequence is that of Glutamine--fructose-6-phosphate aminotransferase [isomerizing] from Oceanobacillus iheyensis (strain DSM 14371 / CIP 107618 / JCM 11309 / KCTC 3954 / HTE831).